A 132-amino-acid chain; its full sequence is UPF0251 protein PTH_0588 (132 aa).

This sequence belongs to the UPF0251 family.

The protein is UPF0251 protein PTH_0588 of Pelotomaculum thermopropionicum (strain DSM 13744 / JCM 10971 / SI).